The following is a 489-amino-acid chain: UDP-N-acetylmuramoylalanine--D-glutamate ligase (489 aa).

126–132 (GTNGKTT) is a binding site for ATP.

Belongs to the MurCDEF family.

It localises to the cytoplasm. It catalyses the reaction UDP-N-acetyl-alpha-D-muramoyl-L-alanine + D-glutamate + ATP = UDP-N-acetyl-alpha-D-muramoyl-L-alanyl-D-glutamate + ADP + phosphate + H(+). It functions in the pathway cell wall biogenesis; peptidoglycan biosynthesis. In terms of biological role, cell wall formation. Catalyzes the addition of glutamate to the nucleotide precursor UDP-N-acetylmuramoyl-L-alanine (UMA). This chain is UDP-N-acetylmuramoylalanine--D-glutamate ligase, found in Mycobacterium avium (strain 104).